The following is a 521-amino-acid chain: Medium/long-chain-fatty-acid--[acyl-carrier-protein] ligase MbtM (521 aa).

Belongs to the ATP-dependent AMP-binding enzyme family.

The catalysed reaction is a long-chain fatty acid + holo-[ACP] + ATP = a long-chain fatty acyl-[ACP] + AMP + diphosphate. The enzyme catalyses a medium-chain fatty acid + holo-[ACP] + ATP = a medium-chain fatty acyl-[ACP] + AMP + diphosphate. It participates in siderophore biosynthesis; mycobactin biosynthesis. In terms of biological role, activates lipidic moieties required for mycobactin biosynthesis. Converts medium- to long-chain aliphatic fatty acids into acyl adenylate, which is further transferred on to the phosphopantetheine arm of the carrier protein MbtL. In Mycobacterium bovis (strain ATCC BAA-935 / AF2122/97), this protein is Medium/long-chain-fatty-acid--[acyl-carrier-protein] ligase MbtM (mbtM).